Consider the following 85-residue polypeptide: MPVVTGRLRDPDINPCLSESDASTRCLDENNYDKERCSTYFLKYKNCRKFWHSIMMQRRRNGVKPCMPTAAERDEILRAMGKMPY.

The region spanning 13 to 55 (INPCLSESDASTRCLDENNYDKERCSTYFLKYKNCRKFWHSIM) is the CHCH domain. 2 short sequence motifs (cx9C motif) span residues 16 to 26 (CLSESDASTRC) and 37 to 47 (CSTYFLKYKNC). Intrachain disulfides connect cysteine 16–cysteine 47 and cysteine 26–cysteine 37.

Belongs to the CHCHD7 family. In terms of assembly, monomer.

Its subcellular location is the mitochondrion intermembrane space. This chain is Coiled-coil-helix-coiled-coil-helix domain-containing protein 7 (CHCHD7), found in Macaca fascicularis (Crab-eating macaque).